The primary structure comprises 323 residues: tRNA dimethylallyltransferase (323 aa).

Position 27–34 (27–34 (GPTGSGKT)) interacts with ATP. 29–34 (TGSGKT) is a binding site for substrate. Interaction with substrate tRNA stretches follow at residues 52–55 (DSRQ) and 176–180 (QRIVR).

This sequence belongs to the IPP transferase family. As to quaternary structure, monomer. Requires Mg(2+) as cofactor.

It carries out the reaction adenosine(37) in tRNA + dimethylallyl diphosphate = N(6)-dimethylallyladenosine(37) in tRNA + diphosphate. In terms of biological role, catalyzes the transfer of a dimethylallyl group onto the adenine at position 37 in tRNAs that read codons beginning with uridine, leading to the formation of N6-(dimethylallyl)adenosine (i(6)A). In Desulfovibrio desulfuricans (strain ATCC 27774 / DSM 6949 / MB), this protein is tRNA dimethylallyltransferase.